The following is a 131-amino-acid chain: Interleukin-13 (131 aa).

Residues 1–18 (MALWVTAVLALACLGGLA) form the signal peptide. N-linked (GlcNAc...) asparagine glycans are attached at residues N42, N53, N76, and N121. 2 disulfides stabilise this stretch: C52–C80 and C68–C94.

It belongs to the IL-4/IL-13 family. Interacts with IL13RA2.

It is found in the secreted. Functionally, cytokine that plays important roles in allergic inflammation and immune response to parasite infection. Synergizes with IL2 in regulating interferon-gamma synthesis. Stimulates B-cell proliferation, and activation of eosinophils, basophils, and mast cells. Plays an important role in controlling IL33 activity by modulating the production of transmembrane and soluble forms of interleukin-1 receptor-like 1/IL1RL1. Displays the capacity to antagonize Th1-driven proinflammatory immune response and downregulates synthesis of many proinflammatory cytokines including IL1, IL6, IL10, IL12 and TNF-alpha through a mechanism that partially involves suppression of NF-kappa-B. Also functions on nonhematopoietic cells, including endothelial cells where it induces vascular cell adhesion protein 1/VCAM1, which is important in the recruitment of eosinophils. Exerts its biological effects through its receptors which comprises the IL4R chain and the IL13RA1 chain, to activate JAK1 and TYK2, leading to the activation of STAT6. Aside from IL13RA1, another receptor IL13RA2 acts as a high affinity decoy for IL13 and mediates internalization and depletion of extracellular IL13. The polypeptide is Interleukin-13 (Il13) (Rattus norvegicus (Rat)).